A 456-amino-acid polypeptide reads, in one-letter code: Protein COBRA (456 aa).

An N-terminal signal peptide occupies residues 1-36 (MESFFSRSTSIVSKLSFLALWIVFLISSSSFTSTEA). N-linked (GlcNAc...) asparagine glycosylation is found at N45, N170, N178, N217, N242, N258, N328, N343, and N362. Residue N431 is the site of GPI-anchor amidated asparagine attachment. Positions 432–456 (GGSRSQFSFVAAVLLPLLVFFFFSA) are cleaved as a propeptide — removed in mature form.

The protein belongs to the COBRA family. As to expression, expressed in roots, stems, leaves, flowers and siliques. Up-regulated in the root zone of rapid longitudinal expansion.

The protein resides in the lateral cell membrane. Its function is as follows. Involved in determining the orientation of cell expansion, probably by playing an important role in cellulose deposition. May act by recruiting cellulose synthesizing complexes to discrete positions on the cell surface. The sequence is that of Protein COBRA (COB) from Arabidopsis thaliana (Mouse-ear cress).